The primary structure comprises 330 residues: DNA-directed RNA polymerase subunit alpha (330 aa).

Residues 1–229 (MKNIKFIKPF…DHFNVLVELS (229 aa)) form an alpha N-terminal domain (alpha-NTD) region. The alpha C-terminal domain (alpha-CTD) stretch occupies residues 245 to 330 (AHNSVLDLEI…HSVEEDKDKH (86 aa)).

The protein belongs to the RNA polymerase alpha chain family. Homodimer. The RNAP catalytic core consists of 2 alpha, 1 beta, 1 beta' and 1 omega subunit. When a sigma factor is associated with the core the holoenzyme is formed, which can initiate transcription.

The catalysed reaction is RNA(n) + a ribonucleoside 5'-triphosphate = RNA(n+1) + diphosphate. Its function is as follows. DNA-dependent RNA polymerase catalyzes the transcription of DNA into RNA using the four ribonucleoside triphosphates as substrates. The chain is DNA-directed RNA polymerase subunit alpha from Onion yellows phytoplasma (strain OY-M).